The sequence spans 202 residues: Prephenate decarboxylase (202 aa).

Belongs to the prephenate decarboxylase family.

The catalysed reaction is prephenate + H(+) = 3-[(4R)-4-hydroxycyclohexa-1,5-dien-1-yl]-2-oxopropanoate + CO2. In vivo, involved in the biosynthesis of 2-carboxy-6-hydroxyoctahydroindole (Choi) present in the nonribosomal glycopeptides aeruginoside 126A and B. AerD is an unusual prephenate decarboxylase that avoids the typical aromatization of the cyclohexadienol ring of prephenate. AerD catalyzes the protonation at C8 followed by decarboxylation to produce the dihydro-4-hydroxyphenylpyruvate regioisomer A258 (H2HPP A258)(3-(4-hydroxycyclohexa- 1,5-dienyl)-2-oxopropanoic acid), which is able to undergo a nonenzymatic isomerization to produce dihydro-4-hydroxyphenylpyruvate regioisomer A295 (H2HPP A295)(3-(4-hydroxycyclohex-2-enylidene)-2-oxopropanoic acid). The protein is Prephenate decarboxylase of Planktothrix agardhii (strain NIVA-CYA 126/8).